The primary structure comprises 736 residues: MAKRGAFSSFHSFLIVLLFLNSVLAVTHGHQDKQVYIVYMGSLPSRADYTPMSHHMNILQEVARESSIEGRLVRSYKRSFNGFVARLTESERERVADMEGVVSVFPNKKLKLQTSASWDFMGLKEGKGTKRNPSVESDTIIGVFDGGIWPESESFSDKGFGPPPKKWKGICAGGKNFTCNNKLIGARHYSPGDARDSTGHGTHTASIAAGNAVANTSFFGIGNGTVRGAVPASRIAVYRVCAGECRDDAILSAFDDAISDGVDIITISIGDINVYPFEKDPIAIGAFHAMSKGILTVNAAGNTGPDTASITSLAPWLLTVAASTANREFVSKVVLGDGKTLVGKSVNGFDLKGKKFPLVYGKSAALSLSQAKCAEDCTPECLDASLVKGKILVCNRFLPYVAYTKRAVAAIFEDGSDWAQINGLPVSGLQKDDFESVLSYFKSEKSPEAAVLKSESIFYQTAPKILSFSSRGPNIIVADILKPDITAPGLEILAANSLRASPFYDTAYVKYSVESGTSMSCPHAAGVAAYVKTFHPQWSPSMIKSAIMTTAWSMNASQSGYASTEFAYGAGHVDPIAATNPGLVYEITKTDYFAFLCGMNYNKTTVKLISGEAVTCSEKISPRNLNYPSMSAKLSGSNISFIVTFNRTVTNVGTPNSTYKSKVVLNHGSKLNVKVSPSVLSMKSMNEKQSFTVTVSASELHSELPSSANLIWSDGTHNVRSPIVVYTGDFSQPSSS.

An N-terminal signal peptide occupies residues 1–25; sequence MAKRGAFSSFHSFLIVLLFLNSVLA. Residues 26-113 constitute a propeptide, activation peptide; it reads VTHGHQDKQV…VFPNKKLKLQ (88 aa). In terms of domain architecture, Inhibitor I9 spans 35–112; that stretch reads VYIVYMGSLP…SVFPNKKLKL (78 aa). Residues 117–579 form the Peptidase S8 domain; sequence SWDFMGLKEG…AGHVDPIAAT (463 aa). The active-site Charge relay system is aspartate 145. An N-linked (GlcNAc...) asparagine glycan is attached at asparagine 176. Residue histidine 200 is the Charge relay system of the active site. N-linked (GlcNAc...) asparagine glycans are attached at residues asparagine 215 and asparagine 223. Residues 355–437 enclose the PA domain; sequence KFPLVYGKSA…GLQKDDFESV (83 aa). Serine 518 serves as the catalytic Charge relay system. N-linked (GlcNAc...) asparagine glycans are attached at residues asparagine 555, asparagine 602, asparagine 638, asparagine 646, and asparagine 656.

It belongs to the peptidase S8 family. In terms of processing, the C-terminal propeptide is autocleaved.

It localises to the secreted. This Arabidopsis thaliana (Mouse-ear cress) protein is Subtilisin-like protease SBT4.11.